The chain runs to 152 residues: MTEYKKVIAQNKKALFNYFIEERLEAGIVLKGSEVRSLRQGKASIEESHAADTRHEVFLYNCHIAEYEKANRFNHATRRPRKLLLHTKEIKKIIGRIRIKGYTLVALSMYFNKKNKVKVELGIAKGKKLHDKRESIKEKDWKRDQSRLIRQK.

Belongs to the SmpB family.

It is found in the cytoplasm. In terms of biological role, required for rescue of stalled ribosomes mediated by trans-translation. Binds to transfer-messenger RNA (tmRNA), required for stable association of tmRNA with ribosomes. tmRNA and SmpB together mimic tRNA shape, replacing the anticodon stem-loop with SmpB. tmRNA is encoded by the ssrA gene; the 2 termini fold to resemble tRNA(Ala) and it encodes a 'tag peptide', a short internal open reading frame. During trans-translation Ala-aminoacylated tmRNA acts like a tRNA, entering the A-site of stalled ribosomes, displacing the stalled mRNA. The ribosome then switches to translate the ORF on the tmRNA; the nascent peptide is terminated with the 'tag peptide' encoded by the tmRNA and targeted for degradation. The ribosome is freed to recommence translation, which seems to be the essential function of trans-translation. The polypeptide is SsrA-binding protein (Rickettsia conorii (strain ATCC VR-613 / Malish 7)).